The following is a 1399-amino-acid chain: DNA-directed RNA polymerase subunit beta' (1399 aa).

Zn(2+) is bound by residues Cys-71, Cys-73, Cys-86, and Cys-89. Mg(2+) is bound by residues Asp-462, Asp-464, and Asp-466. Zn(2+)-binding residues include Cys-810, Cys-884, Cys-891, and Cys-894. The interval 1379–1399 (KQAAIVPSQPEPQPLALPPAE) is disordered. Residues 1387–1399 (QPEPQPLALPPAE) show a composition bias toward pro residues.

Belongs to the RNA polymerase beta' chain family. The RNAP catalytic core consists of 2 alpha, 1 beta, 1 beta' and 1 omega subunit. When a sigma factor is associated with the core the holoenzyme is formed, which can initiate transcription. Mg(2+) serves as cofactor. Zn(2+) is required as a cofactor.

The enzyme catalyses RNA(n) + a ribonucleoside 5'-triphosphate = RNA(n+1) + diphosphate. DNA-dependent RNA polymerase catalyzes the transcription of DNA into RNA using the four ribonucleoside triphosphates as substrates. In Bradyrhizobium sp. (strain ORS 278), this protein is DNA-directed RNA polymerase subunit beta'.